The following is a 325-amino-acid chain: Solute carrier family 35 member B1 (325 aa).

8 consecutive transmembrane segments (helical) span residues 18–38 (PVCF…QESI), 54–74 (FALS…KLLI), 88–108 (WLYA…NSAL), 139–159 (YPLA…LFMY), 171–191 (IFGY…LTGV), 213–233 (LWST…WEFL), 246–266 (ILLF…TVVY), and 288–308 (VILF…LVFL). Residues 321-325 (KKTSH) carry the Di-lysine motif motif.

This sequence belongs to the nucleotide-sugar transporter family. SLC35B subfamily.

It localises to the endoplasmic reticulum membrane. Probable sugar transporter. This chain is Solute carrier family 35 member B1 (SLC35B1), found in Gallus gallus (Chicken).